The following is a 36-amino-acid chain: Kappa-theraphotoxin-Pg1a (36 aa).

Disulfide bonds link Cys4-Cys19, Cys11-Cys24, and Cys18-Cys31.

This sequence belongs to the neurotoxin 10 (Hwtx-1) family. 44 (Jztx-4) subfamily. Expressed by the venom gland.

The protein localises to the secreted. Functionally, gating modifier of Kv2.1/KCNB1 (IC(50)=5.1 nM), Kv2.2/KCNB2 and Kv4.3/KCND3 channels (IC(50)=39 nM). Acts by shifting the channel activation to more depolarized potentials by stabilizing the resting conformation of the voltage sensor. It completely inhibits opening of the Kv2.1/KCNB1 channel at negative membrane voltages and dramatically shifts channel activation to positive voltages. May act by partitioning into lipid membranes and then by binding the voltage sensor paddle of the channel from a place within the membrane. The sequence is that of Kappa-theraphotoxin-Pg1a from Chilobrachys guangxiensis (Chinese earth tiger tarantula).